A 1640-amino-acid chain; its full sequence is Basal body protein 10 (1640 aa).

Residues 11 to 64 are homodimerization; the sequence is VLRRKLEALGYSDPLEPASLQLVQKLVEDLVHTTDSYTAVKQQCAKQAQEIAAF. Positions 93 to 148 form a coiled coil; the sequence is AERHEREAREHYTAVKRLEDTIAELSYWKHAAAEKLASADKENAGLRKRCEELAKL. Residues 154-185 are disordered; the sequence is SGAATPQSVAPKISSRSPIRVAPPPSPPRPRQ. The span at 174-183 shows a compositional bias: pro residues; sequence VAPPPSPPRP. Coiled-coil stretches lie at residues 191-232, 260-332, 370-411, 461-722, 758-960, 1010-1030, 1059-1086, 1129-1282, 1323-1494, and 1523-1557; these read LQAA…RDVE, ILQL…LQDT, VERL…AQSR, FAAL…AEAD, ARQM…AQAA, GEAL…LVRE, RASA…LAAE, INQY…LQAS, AKDQ…AERD, and AELA…TRAT. Over residues 1592-1618 the composition is skewed to low complexity; it reads GQGQVQGPAGTAPAAAAGAPGPQPGQA. Residues 1592–1640 form a disordered region; that stretch reads GQGQVQGPAGTAPAAAAGAPGPQPGQAQAGGFGGAHGGGSISLSGGPRR. The span at 1619–1631 shows a compositional bias: gly residues; the sequence is QAGGFGGAHGGGS.

It belongs to the CEP135/TSGA10 family. As to quaternary structure, homodimer.

The protein resides in the cytoplasm. Its subcellular location is the cytoskeleton. The protein localises to the microtubule organizing center. It localises to the centrosome. It is found in the centriole. In terms of biological role, microtubule-binding protein essential for cytoskeletal organization (e.g. rootlet microtubule bundles) and flagellar basal body/centriole assembly. This is Basal body protein 10 from Chlamydomonas reinhardtii (Chlamydomonas smithii).